Consider the following 91-residue polypeptide: Small ribosomal subunit protein uS19 (91 aa).

It belongs to the universal ribosomal protein uS19 family.

Protein S19 forms a complex with S13 that binds strongly to the 16S ribosomal RNA. This Azotobacter vinelandii (strain DJ / ATCC BAA-1303) protein is Small ribosomal subunit protein uS19.